Reading from the N-terminus, the 98-residue chain is Large ribosomal subunit protein bL27 (98 aa).

The span at 1-11 (MASKASGGSTR) shows a compositional bias: polar residues. Residues 1 to 20 (MASKASGGSTRNGRDSISKR) form a disordered region.

Belongs to the bacterial ribosomal protein bL27 family.

This Aquifex aeolicus (strain VF5) protein is Large ribosomal subunit protein bL27.